A 480-amino-acid chain; its full sequence is Protein nucleotidyltransferase YdiU (480 aa).

ATP contacts are provided by Gly84, Gly86, Arg87, Lys107, Asp119, Gly120, Arg170, and Arg177. Asp246 (proton acceptor) is an active-site residue. Mg(2+) contacts are provided by Asn247 and Asp256. Residue Asp256 participates in ATP binding.

The protein belongs to the SELO family. The cofactor is Mg(2+). Mn(2+) serves as cofactor.

The enzyme catalyses L-seryl-[protein] + ATP = 3-O-(5'-adenylyl)-L-seryl-[protein] + diphosphate. The catalysed reaction is L-threonyl-[protein] + ATP = 3-O-(5'-adenylyl)-L-threonyl-[protein] + diphosphate. It carries out the reaction L-tyrosyl-[protein] + ATP = O-(5'-adenylyl)-L-tyrosyl-[protein] + diphosphate. It catalyses the reaction L-histidyl-[protein] + UTP = N(tele)-(5'-uridylyl)-L-histidyl-[protein] + diphosphate. The enzyme catalyses L-seryl-[protein] + UTP = O-(5'-uridylyl)-L-seryl-[protein] + diphosphate. The catalysed reaction is L-tyrosyl-[protein] + UTP = O-(5'-uridylyl)-L-tyrosyl-[protein] + diphosphate. Nucleotidyltransferase involved in the post-translational modification of proteins. It can catalyze the addition of adenosine monophosphate (AMP) or uridine monophosphate (UMP) to a protein, resulting in modifications known as AMPylation and UMPylation. This is Protein nucleotidyltransferase YdiU from Pseudoalteromonas atlantica (strain T6c / ATCC BAA-1087).